A 348-amino-acid chain; its full sequence is uncharacterized protein (348 aa).

This is an uncharacterized protein from Aquifex aeolicus (strain VF5).